Reading from the N-terminus, the 105-residue chain is 5-hydroxymethyl-dUMP N-hydrolase (105 aa).

Glycine 6, isoleucine 8, serine 42, glycine 44, glutamate 48, and serine 72 together coordinate 5-hydroxymethyl-dUMP.

Belongs to the 2'-deoxynucleoside 5'-phosphate N-hydrolase 1 family. Monomer and homodimer.

It localises to the cytoplasm. The protein localises to the nucleus. The enzyme catalyses 5-hydroxymethyl-dUMP + H2O = 5-hydroxymethyluracil + 2-deoxy-D-ribose 5-phosphate. Its function is as follows. Part of a nucleotide salvage pathway that eliminates epigenetically modified 5-hydroxymethyl-dCMP (hmdCMP) in a two-step process entailing deamination to cytotoxic 5-hydroxymethyl-dUMP (hmdUMP), followed by its hydrolysis into 5-hydroxymethyluracil (hmU) and 2-deoxy-D-ribose 5-phosphate (deoxyribosephosphate). Catalyzes the second step in that pathway, the hydrolysis of the N-glycosidic bond in hmdUMP, degrading this cytotoxic nucleotide to avoid its genomic integration. The protein is 5-hydroxymethyl-dUMP N-hydrolase of Branchiostoma floridae (Florida lancelet).